A 131-amino-acid chain; its full sequence is Small ribosomal subunit protein uS8c (131 aa).

The protein belongs to the universal ribosomal protein uS8 family. Part of the 30S ribosomal subunit.

Its subcellular location is the plastid. The protein resides in the chloroplast. One of the primary rRNA binding proteins, it binds directly to 16S rRNA central domain where it helps coordinate assembly of the platform of the 30S subunit. This chain is Small ribosomal subunit protein uS8c (rps8), found in Tupiella akineta (Green alga).